The sequence spans 209 residues: Small ribosomal subunit protein uS4 (209 aa).

Zn(2+) contacts are provided by cysteine 9, cysteine 12, cysteine 26, and cysteine 31. The C4-type zinc-finger motif lies at 9–31 (CRLCRREGVKLYLKGERCYSPKC). The region spanning 100–162 (RLDNVVYRLG…RNLELIRQNL (63 aa)) is the S4 RNA-binding domain.

The protein belongs to the universal ribosomal protein uS4 family. In terms of assembly, part of the 30S ribosomal subunit. Contacts protein S5. The interaction surface between S4 and S5 is involved in control of translational fidelity. The cofactor is Zn(2+).

Functionally, one of the primary rRNA binding proteins, it binds directly to 16S rRNA where it helps nucleate assembly of the body and platform of the 30S subunit. This Thermus thermophilus (strain ATCC BAA-163 / DSM 7039 / HB27) protein is Small ribosomal subunit protein uS4 (rpsD).